The following is a 204-amino-acid chain: UPF0637 protein lin1053 (204 aa).

It belongs to the UPF0637 family.

In Listeria innocua serovar 6a (strain ATCC BAA-680 / CLIP 11262), this protein is UPF0637 protein lin1053.